The chain runs to 548 residues: mRNA cleavage and polyadenylation factor CLP1 (548 aa).

Residues glutamate 19, lysine 60, and 123–128 (SSGKTT) each bind ATP. Residues 437 to 478 (ESEVKEEVKEEKNEKDGEIKQDGEGEKKGEGKGEGEGEGEGK) show a composition bias toward basic and acidic residues. Positions 437 to 500 (ESEVKEEVKE…DEEEVPFREE (64 aa)) are disordered. A compositionally biased stretch (acidic residues) spans 479 to 494 (DGEEEGEAEGEDDEEE).

This sequence belongs to the Clp1 family. Clp1 subfamily. Component of a pre-mRNA cleavage factor complex. Interacts directly with PCF11.

The protein localises to the nucleus. In terms of biological role, required for endonucleolytic cleavage during polyadenylation-dependent pre-mRNA 3'-end formation. The sequence is that of mRNA cleavage and polyadenylation factor CLP1 from Cryptococcus neoformans var. neoformans serotype D (strain JEC21 / ATCC MYA-565) (Filobasidiella neoformans).